A 161-amino-acid polypeptide reads, in one-letter code: Type IV major fimbrial protein FimA (161 aa).

A propeptide spans 1-7 (leader sequence); the sequence is MKSLQKG. Phenylalanine 8 carries the N-methylphenylalanine modification. Residues 8–28 form a helical membrane-spanning segment; sequence FTLIELMIVVAIIGILAAFAI. A disulfide bridge links cysteine 63 with cysteine 106.

This sequence belongs to the N-Me-Phe pilin family. As to quaternary structure, the pili are polar flexible filaments of about 5.4 nanometers diameter and 2.5 micrometers average length; they consist of only a single polypeptide chain arranged in a helical configuration of five subunits per turn in the assembled pilus.

It localises to the fimbrium. Its subcellular location is the membrane. In terms of biological role, major component of the type IV fimbriae that plays an essential role in twitching motility, natural transformation, and protease secretion. The chain is Type IV major fimbrial protein FimA (fimA) from Dichelobacter nodosus (Bacteroides nodosus).